Reading from the N-terminus, the 468-residue chain is Ribulose bisphosphate carboxylase large chain (468 aa).

An N6,N6,N6-trimethyllysine modification is found at K5. Substrate contacts are provided by N114 and T164. The active-site Proton acceptor is K166. Position 168 (K168) interacts with substrate. The Mg(2+) site is built by K192, D194, and E195. K192 carries the N6-carboxylysine modification. H285 acts as the Proton acceptor in catalysis. Residues R286, H318, and S370 each contribute to the substrate site.

Belongs to the RuBisCO large chain family. Type I subfamily. In terms of assembly, heterohexadecamer of 8 large chains and 8 small chains; disulfide-linked. The disulfide link is formed within the large subunit homodimers. Requires Mg(2+) as cofactor. In terms of processing, the disulfide bond which can form in the large chain dimeric partners within the hexadecamer appears to be associated with oxidative stress and protein turnover.

It localises to the plastid. Its subcellular location is the chloroplast. The enzyme catalyses 2 (2R)-3-phosphoglycerate + 2 H(+) = D-ribulose 1,5-bisphosphate + CO2 + H2O. The catalysed reaction is D-ribulose 1,5-bisphosphate + O2 = 2-phosphoglycolate + (2R)-3-phosphoglycerate + 2 H(+). Its function is as follows. RuBisCO catalyzes two reactions: the carboxylation of D-ribulose 1,5-bisphosphate, the primary event in carbon dioxide fixation, as well as the oxidative fragmentation of the pentose substrate in the photorespiration process. Both reactions occur simultaneously and in competition at the same active site. This is Ribulose bisphosphate carboxylase large chain from Nolana spathulata (Chilean bell flower).